The sequence spans 704 residues: Zinc finger protein MSN2 (704 aa).

A disordered region spans residues 84 to 246 (PSTTDNSLHL…SISNSNSNST (163 aa)). The span at 91–112 (LHLKADSNKNRDARTIENDSEI) shows a compositional bias: basic and acidic residues. A compositionally biased stretch (polar residues) spans 113-133 (KSTNNASGSGANQYTTLTSPY). The segment covering 141-166 (NMNNPLQSPSPSSVPQNPTINPPINT) has biased composition (low complexity). Polar residues-rich tracts occupy residues 167–193 (ASNETNLSPQTSNGNETLISPRAQQHT) and 204–220 (NGANSNLFIDTNPNNLN). Over residues 228 to 246 (NSDTNSYSNSISNSNSNST) the composition is skewed to low complexity. The 9aaTAD signature appears at 261–269 (SMLDDYVSS). A phosphoserine mark is found at Ser288 and Ser304. The tract at residues 418–437 (NRVQHKQLTSSHNNSSTNMK) is disordered. The segment covering 426–437 (TSSHNNSSTNMK) has biased composition (polar residues). Phosphoserine occurs at positions 451 and 582. The interval 592-634 (LTNQQNNISSSSVNSTGNGAGVTKERRPSYRRKSMTPSRRSSV) is disordered. Positions 593–608 (TNQQNNISSSSVNSTG) are enriched in low complexity. Ser633 is subject to Phosphoserine. C2H2-type zinc fingers lie at residues 647–665 (FHCHICPKSFKRSEHLKRH) and 676–698 (FACHICDKKFSRSDNLSQHIKTH).

In terms of assembly, interacts with WHI2.

The protein resides in the cytoplasm. It localises to the nucleus. Functionally, positive transcriptional factor that acts as a component of the stress responsive system. Recognizes and binds to the stress response element (STRE) which is involved in the response to various forms of stress (heat, oxidative, osmotic, etc.). Involved in the regulation of the CTT1, DDR2, HSP12 genes. May be regulated via WHI2-PSR1 complex phosphatase activity. This is Zinc finger protein MSN2 (MSN2) from Saccharomyces cerevisiae (strain ATCC 204508 / S288c) (Baker's yeast).